Reading from the N-terminus, the 399-residue chain is S-adenosylmethionine synthase (399 aa).

His-16 lines the ATP pocket. Asp-18 is a binding site for Mg(2+). Glu-44 provides a ligand contact to K(+). Positions 57 and 100 each coordinate L-methionine. Residues 100 to 110 (QSSDIAQGVNE) form a flexible loop region. ATP contacts are provided by residues 177–179 (DAK), 244–245 (RF), Asp-253, 259–260 (RK), Ala-276, and Lys-280. Asp-253 is a binding site for L-methionine. Lys-284 contributes to the L-methionine binding site.

Belongs to the AdoMet synthase family. As to quaternary structure, homotetramer; dimer of dimers. Requires Mg(2+) as cofactor. It depends on K(+) as a cofactor.

The protein localises to the cytoplasm. The enzyme catalyses L-methionine + ATP + H2O = S-adenosyl-L-methionine + phosphate + diphosphate. It functions in the pathway amino-acid biosynthesis; S-adenosyl-L-methionine biosynthesis; S-adenosyl-L-methionine from L-methionine: step 1/1. Functionally, catalyzes the formation of S-adenosylmethionine (AdoMet) from methionine and ATP. The overall synthetic reaction is composed of two sequential steps, AdoMet formation and the subsequent tripolyphosphate hydrolysis which occurs prior to release of AdoMet from the enzyme. The chain is S-adenosylmethionine synthase from Lactococcus lactis subsp. cremoris (strain MG1363).